The sequence spans 167 residues: Leptin (167 aa).

Positions 1–21 (MLCGPLCRFLWLWPYLSYVEA) are cleaved as a signal peptide. A disulfide bridge links C117 with C167.

It belongs to the leptin family.

Its subcellular location is the secreted. In terms of biological role, key player in the regulation of energy balance and body weight control. Once released into the circulation, has central and peripheral effects by binding LEPR, found in many tissues, which results in the activation of several major signaling pathways. In the hypothalamus, acts as an appetite-regulating factor that induces a decrease in food intake and an increase in energy consumption by inducing anorexinogenic factors and suppressing orexigenic neuropeptides, also regulates bone mass and secretion of hypothalamo-pituitary-adrenal hormones. In the periphery, increases basal metabolism, influences reproductive function, regulates pancreatic beta-cell function and insulin secretion, is pro-angiogenic for endothelial cell and affects innate and adaptive immunity. In the arcuate nucleus of the hypothalamus, activates by depolarization POMC neurons inducing FOS and SOCS3 expression to release anorexigenic peptides and inhibits by hyperpolarization NPY neurons inducing SOCS3 with a consequent reduction on release of orexigenic peptides. In addition to its known satiety inducing effect, has a modulatory role in nutrient absorption. In the intestine, reduces glucose absorption by enterocytes by activating PKC and leading to a sequential activation of p38, PI3K and ERK signaling pathways which exerts an inhibitory effect on glucose absorption. Acts as a growth factor on certain tissues, through the activation of different signaling pathways increases expression of genes involved in cell cycle regulation such as CCND1, via JAK2-STAT3 pathway, or VEGFA, via MAPK1/3 and PI3K-AKT1 pathways. May also play an apoptotic role via JAK2-STAT3 pathway and up-regulation of BIRC5 expression. Pro-angiogenic, has mitogenic activity on vascular endothelial cells and plays a role in matrix remodeling by regulating the expression of matrix metalloproteinases (MMPs) and tissue inhibitors of metalloproteinases (TIMPs). In innate immunity, modulates the activity and function of neutrophils by increasing chemotaxis and the secretion of oxygen radicals. Increases phagocytosis by macrophages and enhances secretion of pro-inflammatory mediators. Increases cytotoxic ability of NK cells. Plays a pro-inflammatory role, in synergy with IL1B, by inducing NOS2 which promotes the production of IL6, IL8 and Prostaglandin E2, through a signaling pathway that involves JAK2, PI3K, MAP2K1/MEK1 and MAPK14/p38. In adaptive immunity, promotes the switch of memory T-cells towards T helper-1 cell immune responses. Increases CD4(+)CD25(-) T-cell proliferation and reduces autophagy during TCR (T-cell receptor) stimulation, through MTOR signaling pathway activation and BCL2 up-regulation. The polypeptide is Leptin (LEP) (Felis catus (Cat)).